A 193-amino-acid polypeptide reads, in one-letter code: Large ribosomal subunit protein uL18 (193 aa).

It belongs to the universal ribosomal protein uL18 family. As to quaternary structure, part of the 50S ribosomal subunit. Contacts the 5S and 23S rRNAs.

Functionally, this is one of the proteins that bind and probably mediate the attachment of the 5S RNA into the large ribosomal subunit, where it forms part of the central protuberance. The chain is Large ribosomal subunit protein uL18 from Methanococcus vannielii (strain ATCC 35089 / DSM 1224 / JCM 13029 / OCM 148 / SB).